Reading from the N-terminus, the 398-residue chain is MFLKNIFIALAIALLADATPTTSNNSPGFVALNFDVIKTHKNVTGPQGEINTNVNVKRQTVPVKLINEQVSYASDITVGSNKQKLTVVIDTGSSDLWVPDSQVSCQAGQGQDPNFCKNEGTYSPSSSSSSQNLNSPFSIEYGDGTTSQGTWYKDTIGFGGISITKQQFADVTSTSVDQGILGIGYKTHEAEGNYDNVPVTLKNQGIISKNAYSLYLNSRQATSGQIIFGGVDNAKYSGALIALPVTSDNELRIHLNTVKVAGQSINADVDVLLDSGTTITYLQQGVADQVISAFNGQETYDANGNLFYLVDCNLSGSVDFAFDKNAKISVPASEFTAPLYTEDGQVYDQCQLLFGTSDYNILGDNFLRSAYIVYDLDDNEISLAQVKYTTASNIAALT.

The first 18 residues, 1-18 (MFLKNIFIALAIALLADA), serve as a signal peptide directing secretion. Residues 19–58 (TPTTSNNSPGFVALNFDVIKTHKNVTGPQGEINTNVNVKR) constitute a propeptide, activation peptide. N42 carries N-linked (GlcNAc...) asparagine glycosylation. The Peptidase A1 domain occupies 72 to 384 (YASDITVGSN…DLDDNEISLA (313 aa)). Residue D90 is part of the active site. Residue 90-92 (DTG) participates in pepstatin A binding. A compositionally biased stretch (polar residues) spans 103–112 (VSCQAGQGQD). Residues 103 to 139 (VSCQAGQGQDPNFCKNEGTYSPSSSSSSQNLNSPFSI) form a disordered region. The cysteines at positions 105 and 116 are disulfide-linked. Low complexity predominate over residues 123–138 (SPSSSSSSQNLNSPFS). Pepstatin A is bound by residues 140–143 (EYGD) and 274–278 (DSGTT). D274 is an active-site residue. C312 and C350 are joined by a disulfide. N313 is a glycosylation site (N-linked (GlcNAc...) asparagine).

It belongs to the peptidase A1 family. O-glycosylated.

It localises to the secreted. It carries out the reaction Preferential cleavage at the carboxyl of hydrophobic amino acids, but fails to cleave 15-Leu-|-Tyr-16, 16-Tyr-|-Leu-17 and 24-Phe-|-Phe-25 of insulin B chain. Activates trypsinogen, and degrades keratin.. This is Candidapepsin-3 (SAP3) from Candida albicans (strain WO-1) (Yeast).